The primary structure comprises 46 residues: PhoP/PhoQ regulator MgrB (46 aa).

Residues 6 to 26 (WVALVVVVLACLLLWAQVFNM) form a helical membrane-spanning segment.

This sequence belongs to the MgrB family. In terms of assembly, may form homooligomers. Probably interacts with the periplasmic domain of PhoQ.

Its subcellular location is the cell inner membrane. Its function is as follows. PhoP-regulated transcription is redox-sensitive, being activated when the periplasm becomes more reducing. MgrB acts between DsbA/DsbB and PhoP/PhoQ in this pathway. Represses PhoP/PhoQ signaling, possibly by binding to the periplasmic domain of PhoQ, altering its activity and that of downstream effector PhoP. This Escherichia coli O6:K15:H31 (strain 536 / UPEC) protein is PhoP/PhoQ regulator MgrB.